Consider the following 347-residue polypeptide: Protein RecA (347 aa).

An ATP-binding site is contributed by 64 to 71 (GPESSGKT). The interval 328–347 (DKVDEDKTEEEASQESLDLK) is disordered.

Belongs to the RecA family.

It localises to the cytoplasm. Its function is as follows. Can catalyze the hydrolysis of ATP in the presence of single-stranded DNA, the ATP-dependent uptake of single-stranded DNA by duplex DNA, and the ATP-dependent hybridization of homologous single-stranded DNAs. It interacts with LexA causing its activation and leading to its autocatalytic cleavage. This chain is Protein RecA, found in Oceanobacillus iheyensis (strain DSM 14371 / CIP 107618 / JCM 11309 / KCTC 3954 / HTE831).